The sequence spans 129 residues: Large ribosomal subunit protein uL22 (129 aa).

It belongs to the universal ribosomal protein uL22 family. As to quaternary structure, part of the 50S ribosomal subunit.

Functionally, this protein binds specifically to 23S rRNA; its binding is stimulated by other ribosomal proteins, e.g. L4, L17, and L20. It is important during the early stages of 50S assembly. It makes multiple contacts with different domains of the 23S rRNA in the assembled 50S subunit and ribosome. The globular domain of the protein is located near the polypeptide exit tunnel on the outside of the subunit, while an extended beta-hairpin is found that lines the wall of the exit tunnel in the center of the 70S ribosome. In Aster yellows witches'-broom phytoplasma (strain AYWB), this protein is Large ribosomal subunit protein uL22.